A 307-amino-acid chain; its full sequence is Elongation factor Ts (307 aa).

The segment at 80-83 (TDFV) is involved in Mg(2+) ion dislocation from EF-Tu.

This sequence belongs to the EF-Ts family.

Its subcellular location is the cytoplasm. In terms of biological role, associates with the EF-Tu.GDP complex and induces the exchange of GDP to GTP. It remains bound to the aminoacyl-tRNA.EF-Tu.GTP complex up to the GTP hydrolysis stage on the ribosome. The chain is Elongation factor Ts from Bradyrhizobium diazoefficiens (strain JCM 10833 / BCRC 13528 / IAM 13628 / NBRC 14792 / USDA 110).